The chain runs to 183 residues: Gamma-crystallin N-B (183 aa).

4 Beta/gamma crystallin 'Greek key' domains span residues 6–46 (GKIC…RVES), 47–89 (GAWI…RPIR), 95–136 (YRME…RVFG), and 138–180 (GAWV…RRIV).

The protein belongs to the beta/gamma-crystallin family. Monomer.

Its function is as follows. Crystallins are the dominant structural components of the vertebrate eye lens. In Danio rerio (Zebrafish), this protein is Gamma-crystallin N-B (crygnb).